The sequence spans 474 residues: tRNA-2-methylthio-N(6)-dimethylallyladenosine synthase (474 aa).

The MTTase N-terminal domain occupies 3-120; that stretch reads KKLHIKTWGC…LPEMINHVQG (118 aa). The [4Fe-4S] cluster site is built by C12, C49, C83, C157, C161, and C164. The region spanning 143–375 is the Radical SAM core domain; it reads RAEGPTAFVS…QQRISQQAME (233 aa). A TRAM domain is found at 378–441; that stretch reads RKMVGTVQRV…ASSLRGILLR (64 aa).

This sequence belongs to the methylthiotransferase family. MiaB subfamily. Monomer. [4Fe-4S] cluster serves as cofactor.

It localises to the cytoplasm. The enzyme catalyses N(6)-dimethylallyladenosine(37) in tRNA + (sulfur carrier)-SH + AH2 + 2 S-adenosyl-L-methionine = 2-methylsulfanyl-N(6)-dimethylallyladenosine(37) in tRNA + (sulfur carrier)-H + 5'-deoxyadenosine + L-methionine + A + S-adenosyl-L-homocysteine + 2 H(+). In terms of biological role, catalyzes the methylthiolation of N6-(dimethylallyl)adenosine (i(6)A), leading to the formation of 2-methylthio-N6-(dimethylallyl)adenosine (ms(2)i(6)A) at position 37 in tRNAs that read codons beginning with uridine. In Yersinia pestis bv. Antiqua (strain Antiqua), this protein is tRNA-2-methylthio-N(6)-dimethylallyladenosine synthase.